The chain runs to 338 residues: Terpene synthase 1 (338 aa).

Positions 80 to 85 (DDALDS) match the DDxx(x)D/E motif motif. The short motif at 220–228 (NDLVSYEKE) is the NDxxSxxxD/E motif element.

This sequence belongs to the terpene synthase family.

It catalyses the reaction (2E,6E)-farnesyl diphosphate = (2S,3R,6S,9S)-(-)-protoillud-7-ene + diphosphate. Its function is as follows. Terpene synthase that converts its substrate farnesyl diphosphate (FPP) into the sesquiterpene protoillud-7-ene. In Cavenderia fasciculata (Slime mold), this protein is Terpene synthase 1.